The chain runs to 434 residues: Serine hydroxymethyltransferase (434 aa).

(6S)-5,6,7,8-tetrahydrofolate-binding positions include L128 and 132 to 134; that span reads GHL. At K237 the chain carries N6-(pyridoxal phosphate)lysine.

This sequence belongs to the SHMT family. In terms of assembly, homodimer. Pyridoxal 5'-phosphate is required as a cofactor.

It localises to the cytoplasm. It carries out the reaction (6R)-5,10-methylene-5,6,7,8-tetrahydrofolate + glycine + H2O = (6S)-5,6,7,8-tetrahydrofolate + L-serine. It functions in the pathway one-carbon metabolism; tetrahydrofolate interconversion. The protein operates within amino-acid biosynthesis; glycine biosynthesis; glycine from L-serine: step 1/1. In terms of biological role, catalyzes the reversible interconversion of serine and glycine with tetrahydrofolate (THF) serving as the one-carbon carrier. This reaction serves as the major source of one-carbon groups required for the biosynthesis of purines, thymidylate, methionine, and other important biomolecules. Also exhibits THF-independent aldolase activity toward beta-hydroxyamino acids, producing glycine and aldehydes, via a retro-aldol mechanism. This Corynebacterium glutamicum (strain R) protein is Serine hydroxymethyltransferase.